Reading from the N-terminus, the 161-residue chain is Nucleotide-binding protein Rmet_2899 (161 aa).

This sequence belongs to the YajQ family.

Its function is as follows. Nucleotide-binding protein. The chain is Nucleotide-binding protein Rmet_2899 from Cupriavidus metallidurans (strain ATCC 43123 / DSM 2839 / NBRC 102507 / CH34) (Ralstonia metallidurans).